Reading from the N-terminus, the 530-residue chain is ATP synthase subunit alpha (530 aa).

Position 172 to 179 (Gly172 to Thr179) interacts with ATP.

Belongs to the ATPase alpha/beta chains family. F-type ATPases have 2 components, CF(1) - the catalytic core - and CF(0) - the membrane proton channel. CF(1) has five subunits: alpha(3), beta(3), gamma(1), delta(1), epsilon(1). CF(0) has three main subunits: a(1), b(2) and c(9-12). The alpha and beta chains form an alternating ring which encloses part of the gamma chain. CF(1) is attached to CF(0) by a central stalk formed by the gamma and epsilon chains, while a peripheral stalk is formed by the delta and b chains.

It localises to the cell inner membrane. The enzyme catalyses ATP + H2O + 4 H(+)(in) = ADP + phosphate + 5 H(+)(out). Functionally, produces ATP from ADP in the presence of a proton gradient across the membrane. The alpha chain is a regulatory subunit. This chain is ATP synthase subunit alpha, found in Phocaeicola vulgatus (strain ATCC 8482 / DSM 1447 / JCM 5826 / CCUG 4940 / NBRC 14291 / NCTC 11154) (Bacteroides vulgatus).